Here is a 633-residue protein sequence, read N- to C-terminus: Membrane protein insertase YidC (633 aa).

The next 6 helical transmembrane spans lie at 3 to 23 (KNTLIGFLLIGVVLFAFSWFN), 377 to 397 (FIHNYGILILLMTIIVKIILF), 453 to 473 (LPMLLQMPILIALFMFFPSAI), 499 to 519 (IPIITPYFGNHISLFCLLMTI), 541 to 561 (GMKAMMYMMPLMFLVFFNQYA), and 562 to 582 (SGLTYYYFISTLITIVQTLIF). The interval 612–633 (LEEAQRAQQETLRKQQEAKKKR) is disordered.

Belongs to the OXA1/ALB3/YidC family. Type 1 subfamily. As to quaternary structure, interacts with the Sec translocase complex via SecD. Specifically interacts with transmembrane segments of nascent integral membrane proteins during membrane integration.

The protein resides in the cell inner membrane. Required for the insertion and/or proper folding and/or complex formation of integral membrane proteins into the membrane. Involved in integration of membrane proteins that insert both dependently and independently of the Sec translocase complex, as well as at least some lipoproteins. Aids folding of multispanning membrane proteins. This Parabacteroides distasonis (strain ATCC 8503 / DSM 20701 / CIP 104284 / JCM 5825 / NCTC 11152) protein is Membrane protein insertase YidC.